We begin with the raw amino-acid sequence, 472 residues long: 3beta,22alpha-dihydroxysteroid 3-dehydrogenase (472 aa).

A helical transmembrane segment spans residues 1–21 (MAFTAFLLLLSSIAAGFLLLL). Cys418 is a binding site for heme.

It belongs to the cytochrome P450 family. Requires heme as cofactor.

The protein localises to the membrane. The catalysed reaction is (22S)-22-hydroxycampesterol + reduced [NADPH--hemoprotein reductase] + O2 = (22S)-22-hydroxycampest-4-en-3-one + oxidized [NADPH--hemoprotein reductase] + 2 H2O + H(+). It carries out the reaction 6-deoxoteasterone + reduced [NADPH--hemoprotein reductase] + O2 = 3-dehydro-6-deoxoteasterone + oxidized [NADPH--hemoprotein reductase] + 2 H2O + H(+). The enzyme catalyses 6-deoxycathasterone + reduced [NADPH--hemoprotein reductase] + O2 = (22S,24R)-22-hydroxy-5alpha-ergostan-3-one + oxidized [NADPH--hemoprotein reductase] + 2 H2O + H(+). It catalyses the reaction (22R,23R)-22,23-dihydroxycampesterol + reduced [NADPH--hemoprotein reductase] + O2 = (22R,23R)-22,23-dihydroxycampest-4-en-3-one + oxidized [NADPH--hemoprotein reductase] + 2 H2O + H(+). It functions in the pathway plant hormone biosynthesis; brassinosteroid biosynthesis. In terms of biological role, catalyzes C3-oxidation steps in brassinosteroids biosynthesis. Converts (22S)-22-hydroxycampesterol (22-OHCR) to (22S,24R)-22-hydroxyergost-4-en-3-one (22-hydroxy-campesta-4-en-3-one, 22-OH-4-en-3-one), 6-deoxocathasterone (6-deoxoCT) to (22S,24R)-22-hydroxy-5alpha-ergostan-3-one (22-hydroxy-campesta-3-one, 22-OH-3-one), (22R,23R)-22,23-dihydroxycampesterol (22,23-diOHCR) to (22R,23R)-22,23-dihydroxy-campest-4-en-3-one (22,23-diOH-4-en-3-one), and 6-deoxoteasterone (6-deoxoTE) to 3-dehydro-6-deoxoteasterone (6-deoxo3DT, 6-deoxo-3-DHT). The polypeptide is 3beta,22alpha-dihydroxysteroid 3-dehydrogenase (Arabidopsis thaliana (Mouse-ear cress)).